Reading from the N-terminus, the 110-residue chain is UPF0060 membrane protein Bcep1808_1236 (110 aa).

The next 3 membrane-spanning stretches (helical) occupy residues 9-29 (ALFAVTAVAEIVGCYLPWLVL), 34-54 (PVWLLVPAALSLALFAWLLTL), and 66-86 (YGGVYIGVALLWLRVVDGVAL).

This sequence belongs to the UPF0060 family.

It localises to the cell inner membrane. The chain is UPF0060 membrane protein Bcep1808_1236 from Burkholderia vietnamiensis (strain G4 / LMG 22486) (Burkholderia cepacia (strain R1808)).